The primary structure comprises 64 residues: MKQKTHKGAAKRIKISGSGKLRREQANRRHLLEGKPSKRTRRLKGTEDVAPADVKRMKRLLGKA.

The segment covering 1–14 (MKQKTHKGAAKRIK) has biased composition (basic residues). The disordered stretch occupies residues 1-50 (MKQKTHKGAAKRIKISGSGKLRREQANRRHLLEGKPSKRTRRLKGTEDVA). Residues 21–36 (LRREQANRRHLLEGKP) are compositionally biased toward basic and acidic residues.

The protein belongs to the bacterial ribosomal protein bL35 family.

In Corynebacterium jeikeium (strain K411), this protein is Large ribosomal subunit protein bL35.